A 138-amino-acid polypeptide reads, in one-letter code: Putative pre-16S rRNA nuclease (138 aa).

Belongs to the YqgF nuclease family.

It localises to the cytoplasm. Its function is as follows. Could be a nuclease involved in processing of the 5'-end of pre-16S rRNA. This chain is Putative pre-16S rRNA nuclease, found in Escherichia coli O157:H7.